The sequence spans 638 residues: 1-deoxy-D-xylulose-5-phosphate synthase (638 aa).

Thiamine diphosphate is bound by residues His-79 and 120–122 (GHS). Asp-151 contacts Mg(2+). Residues 152–153 (GA), Asn-182, Tyr-291, and Glu-373 contribute to the thiamine diphosphate site. Asn-182 serves as a coordination point for Mg(2+).

Belongs to the transketolase family. DXPS subfamily. Homodimer. It depends on Mg(2+) as a cofactor. Thiamine diphosphate is required as a cofactor.

The enzyme catalyses D-glyceraldehyde 3-phosphate + pyruvate + H(+) = 1-deoxy-D-xylulose 5-phosphate + CO2. Its pathway is metabolic intermediate biosynthesis; 1-deoxy-D-xylulose 5-phosphate biosynthesis; 1-deoxy-D-xylulose 5-phosphate from D-glyceraldehyde 3-phosphate and pyruvate: step 1/1. In terms of biological role, catalyzes the acyloin condensation reaction between C atoms 2 and 3 of pyruvate and glyceraldehyde 3-phosphate to yield 1-deoxy-D-xylulose-5-phosphate (DXP). This is 1-deoxy-D-xylulose-5-phosphate synthase from Xanthomonas oryzae pv. oryzae (strain MAFF 311018).